Reading from the N-terminus, the 385-residue chain is MELQEVLHMNGGEGDTSYAKNSSYNQLVLTKVKPVLEQCIRELLRANLPNINKCIKVADLGCASGPNTLLTVRDIVQSIDKVGQEEKNELEHPTIQIFLNDLFQNDFNSVFKLLPSFYRKLEKENGRKIGSCLISAMPGSFYGRLFPEESMHFLHSCYSVHWLSQVPSGLVTELGISANKGIIYSSKASPPPVQKAYLDQFTKDFTTFLRIHSEELLSGGRMLLTCICKGDESDGLNTIDLLERAINDLVVEGLLEEEKLDSFNLPLYTPSLEVVKCIVEEEGSFEILYLETFKVRYDAGFSIDDDYQVRSLFQVYCDEHVKAAYVTFFFRAVFEPILASHFGEAIMPDLFHRFAKNAAKALRLGNGFYNSLIISLAKKPEKSDV.

The S-adenosyl-L-homocysteine site is built by Tyr18, Cys62, Asn67, Asp101, Leu102, Ser140, Phe141, and Cys157. Caffeine contacts are provided by Tyr158, His161, and Trp162. Asn179 provides a ligand contact to Mg(2+). Thr238 is a caffeine binding site. Mg(2+) contacts are provided by Asp261, Phe263, and Asn264. Tyr369 serves as a coordination point for caffeine.

Belongs to the methyltransferase superfamily. Type-7 methyltransferase family. The cofactor is Mg(2+).

The protein operates within alkaloid biosynthesis. Its function is as follows. May be involved in the biosynthesis of caffeine. This is Probable caffeine synthase MTL2 from Coffea canephora (Robusta coffee).